The following is a 153-amino-acid chain: LOB domain-containing protein 26 (153 aa).

The LOB domain occupies 4 to 105 (NPCEVCRFQN…EEVSKTKKLL (102 aa)). Residues 126 to 153 (KSKPSVLRKRKRKTKSSDESAIRVVEDS) form a disordered region. Positions 140-153 (KSSDESAIRVVEDS) are enriched in basic and acidic residues.

This sequence belongs to the LOB domain-containing protein family.

This chain is LOB domain-containing protein 26 (LBD26), found in Arabidopsis thaliana (Mouse-ear cress).